Consider the following 963-residue polypeptide: Protein NLP2 (963 aa).

An RWP-RK domain is found at 635–716 (RRPGEKRRTK…IDSVQGVQGS (82 aa)). Residues 734 to 755 (MSGTGTSFKNPNAQTENGVSAQ) are compositionally biased toward polar residues. The disordered stretch occupies residues 734-794 (MSGTGTSFKN…QSTNTGTTSN (61 aa)). Residues 756 to 794 (GTAAAPKSPPSSSCSHSSGSSTCCSTGANQSTNTGTTSN) are compositionally biased toward low complexity. The region spanning 862-945 (ASKVKATFGE…RTIKISVHEA (84 aa)) is the PB1 domain.

The protein localises to the nucleus. In terms of biological role, probable transcription factor. The protein is Protein NLP2 (NLP2) of Arabidopsis thaliana (Mouse-ear cress).